The sequence spans 321 residues: Epiphycan (321 aa).

Positions 1-19 (MKALARLIVGLLILDAAVT) are cleaved as a signal peptide. Residue Thr60 is glycosylated (O-linked (GalNAc...) threonine). A glycan (O-linked (Xyl...) (dermatan sulfate) serine) is linked at Ser64. Residues 64–100 (SGNRELLTPPPQPEEAEEEEEEESTPRLIDGSSPQEP) form a disordered region. Residues 77 to 86 (EEAEEEEEEE) are compositionally biased toward acidic residues. O-linked (GalNAc...) serine glycosylation is present at Ser95. Residues 105–142 (VLGPQTNEDFPTCLLCTCISTTVYCDDHELDAIPPLPK) form the LRRNT domain. The cysteines at positions 117 and 129 are disulfide-linked. LRR repeat units lie at residues 143–164 (NTAY…DFAS), 167–188 (DLRR…AFRK), 191–212 (QLRE…PTTL), 237–257 (DLHH…PLPE), and 258–279 (NLRA…TFCN). Cys278 and Cys311 are disulfide-bonded. Asn282 is a glycosylation site (N-linked (GlcNAc...) asparagine). The LRR 6 repeat unit spans residues 289 to 309 (ALEDIRLDGNPINLSKTPQAY).

It belongs to the small leucine-rich proteoglycan (SLRP) family. SLRP class III subfamily. Post-translationally, a long and a short form present in approximately equimolar amounts may arise by proteolysis or cleavage by exopeptidases. The O-linked polysaccharides on Thr-60 and Ser-95 are probably the mucin type linked to GalNAc. There is one glycosaminoglycan chain, known to be dermatan sulfate, and it is probably the O-glycosylation at Ser-64. In terms of tissue distribution, preferentially expressed in the zone of flattened chondrocytes of the developing limb cartilage.

It localises to the secreted. Its subcellular location is the extracellular space. The protein resides in the extracellular matrix. Its function is as follows. May have a role in bone formation and also in establishing the ordered structure of cartilage through matrix organization. This is Epiphycan (EPYC) from Bos taurus (Bovine).